Consider the following 187-residue polypeptide: Ubiquinone biosynthesis protein COQ4 homolog, mitochondrial (187 aa).

Positions 77, 78, 81, and 93 each coordinate Zn(2+).

This sequence belongs to the COQ4 family. As to quaternary structure, component of a multi-subunit COQ enzyme complex. Zn(2+) is required as a cofactor.

The protein localises to the mitochondrion inner membrane. It catalyses the reaction a 4-hydroxy-3-methoxy-5-(all-trans-polyprenyl)benzoate + H(+) = a 2-methoxy-6-(all-trans-polyprenyl)phenol + CO2. Its pathway is cofactor biosynthesis; ubiquinone biosynthesis. Lyase that catalyzes the C1-decarboxylation of 4-hydroxy-3-methoxy-5-(all-trans-polyprenyl)benzoic acid into 2-methoxy-6-(all-trans-polyprenyl)phenol during ubiquinone biosynthesis. The sequence is that of Ubiquinone biosynthesis protein COQ4 homolog, mitochondrial from Leishmania braziliensis.